A 1064-amino-acid polypeptide reads, in one-letter code: Protein NLRC3 (1064 aa).

Positions 138 to 459 (RVSLTIGVAG…YCFIHLSLQE (322 aa)) constitute an NACHT domain. Residue 144–151 (GVAGVGKT) coordinates ATP. LRR repeat units lie at residues 338-362 (LGHL…LCEL), 570-593 (LSEL…TLAG), 632-662 (LPQL…VLSG), 664-687 (DCRI…ALAR), 692-715 (NRSL…ALAD), 720-743 (NRTL…CVAE), 748-771 (NQTI…QMAD), 776-799 (NRSL…ALAE), 804-827 (NQIL…VLMR), 832-855 (NQTL…ALTQ), 860-883 (NNTL…AIAV), 888-911 (NHSL…ALGQ), 916-939 (NRTL…SVAG), 972-995 (NRTL…ALAN), 1000-1022 (NSSL…IFVA), and 1028-1051 (NHGL…MISE).

This sequence belongs to the NLRP family. In terms of assembly, directly interacts (via CARD) with TMEM173/STING; this interaction reduces TMEM173 trafficking to the perinuclear region in response to interferon stimulatory DNA. Also interacts, but to a lesser extent, with TBK1. Interacts with TRAF6; this interaction results in decreased TRAF6 'Lys-63'-linked polyubiquitination, but leaves 'Lys-48'-linked chains unchanged, promoting TRAF6 protein degradation. Interacts with PIK3R1/PIK3R2; this interaction disrupts the association between PIK3R1/PIK3R2 and the p110 catalytic subunit PIK3CA/PIK3CB/PIK3CD and reduces PIK3R1/PIK3R2 activation. Weakly interacts with PYCARD/ASC. Interacts with CASP1 and CASP5. As to expression, expressed in bone marrow-derived macrophages.

The protein resides in the cytoplasm. Negative regulator of the innate immune response. Attenuates signaling pathways activated by Toll-like receptors (TLRs) and the DNA sensor STING/TMEM173 in response to pathogen-associated molecular patterns, such as intracellular poly(dA:dT), but not poly(I:C), or in response to DNA virus infection, including that of Herpes simplex virus 1 (HSV1). May affect TLR4 signaling by acting at the level of TRAF6 ubiquitination, decreasing the activating 'Lys-63'-linked ubiquitination and leaving unchanged the degradative 'Lys-48'-linked ubiquitination. Inhibits the PI3K-AKT-mTOR pathway possibly by directly interacting with the posphatidylinositol 3-kinase regulatory subunit p85 (PIK3R1/PIK3R2) and disrupting the association between PIK3R1/PIK3R2 and the catalytic subunit p110 (PIK3CA/PIK3CB/PIK3CD) and reducing PIK3R1/PIK3R2 activation. Via its regulation of the PI3K-AKT-mTOR pathway, controls cell proliferation, predominantly in intestinal epithelial cells. May also affect NOD1- or NOD2-mediated NF-kappa-B activation. Might also affect the inflammatory response by preventing NLRP3 inflammasome formation, CASP1 cleavage and IL1B maturation. This is Protein NLRC3 (Nlrc3) from Mus musculus (Mouse).